The sequence spans 175 residues: CDP-archaeol synthase (175 aa).

4 helical membrane passes run 41–61 (GLFS…WLSF), 82–102 (LIVV…KSFF), 122–142 (FVVG…VSNF), and 150–170 (VIII…FIGV).

The protein belongs to the CDP-archaeol synthase family. Mg(2+) is required as a cofactor.

It is found in the cell membrane. It catalyses the reaction 2,3-bis-O-(geranylgeranyl)-sn-glycerol 1-phosphate + CTP + H(+) = CDP-2,3-bis-O-(geranylgeranyl)-sn-glycerol + diphosphate. Its pathway is membrane lipid metabolism; glycerophospholipid metabolism. Functionally, catalyzes the formation of CDP-2,3-bis-(O-geranylgeranyl)-sn-glycerol (CDP-archaeol) from 2,3-bis-(O-geranylgeranyl)-sn-glycerol 1-phosphate (DGGGP) and CTP. This reaction is the third ether-bond-formation step in the biosynthesis of archaeal membrane lipids. The chain is CDP-archaeol synthase from Methanosarcina mazei (strain ATCC BAA-159 / DSM 3647 / Goe1 / Go1 / JCM 11833 / OCM 88) (Methanosarcina frisia).